We begin with the raw amino-acid sequence, 313 residues long: Calcium homeostasis modulator protein 6 (313 aa).

Residues 1–21 lie on the Cytoplasmic side of the membrane; sequence MEKFKAVLDLQRKHRNALGYS. Residues 22-37 traverse the membrane as a helical segment; that stretch reads LVTLLTAGGEKIFSSV. At 38–46 the chain is on the extracellular side; that stretch reads VFQCPCTAT. 3 cysteine pairs are disulfide-bonded: Cys41–Cys125, Cys43–Cys154, and Cys138–Cys145. Residues 47–68 form a helical membrane-spanning segment; it reads WNLPYGLVFLLVPALALFLLGY. At 69-101 the chain is on the cytoplasmic side; the sequence is ALSARTWRLLTGCCSRSARFSSGLRSAFVCAQL. A helical membrane pass occupies residues 102–126; sequence SMTAAFAPLTWVAVALLEGSFYQCA. Residues 127–167 are Extracellular-facing; it reads VSGSARLAPYLCKGRDPNCNATLPQAPCNKQKVEMQEILSQ. The helical transmembrane segment at 168 to 190 threads the bilayer; the sequence is LKAQSQVFGWILIAAVIILLLLV. Over 191 to 313 the chain is Cytoplasmic; the sequence is KSVTRCFSPV…DMSMTNTHEL (123 aa).

This sequence belongs to the CALHM family. Oligomerizes to form decameric and undecameric channels. Post-translationally, N-glycosylated. In terms of tissue distribution, immune cells in primary and secondary lymphoid organs.

It is found in the cell membrane. The enzyme catalyses ATP(in) = ATP(out). Its activity is regulated as follows. Inhibited by Gd(3+). Partially inhibited by divalent ions Ca(2+) and Ba(2+). Its function is as follows. Pore-forming subunit of an ATP-permeable channel. In response to pathogen-derived and proinflammatory stimuli, relocates from intracellular compartments to NK-dendritic cell and NK-macrophage immune synapses where it mediates ATP efflux and NK cell activation involved in antimicrobial and antitumor responses. May assemble to form gap junction channel-like structures with gating and ion conductance likely regulated by membrane lipids and voltage rather than by extracellular calcium levels. The chain is Calcium homeostasis modulator protein 6 from Mus musculus (Mouse).